Reading from the N-terminus, the 128-residue chain is MEELICTYPYHSNLFMFLFLFFCPSKRARRGHPKFLFTLCYKSNHLIPKLLPPSLFTKRVMLNPSSHPPSPDFPTGSSASPRVKLRPSTLWAPPLTVSSDFAASSSSTAPVTVTDKPVTPAVSKRYQP.

Disordered regions lie at residues 62-83 (LNPS…SPRV) and 101-128 (FAAS…RYQP). Residues 101–114 (FAASSSSTAPVTVT) are compositionally biased toward low complexity.

It localises to the cytoplasm. The protein localises to the nucleus. This is an uncharacterized protein from Saccharomyces cerevisiae (strain ATCC 204508 / S288c) (Baker's yeast).